The chain runs to 677 residues: DNA ligase (677 aa).

NAD(+) contacts are provided by residues 35–39 (DAEYD), 84–85 (SL), and glutamate 116. Lysine 118 serves as the catalytic N6-AMP-lysine intermediate. NAD(+) contacts are provided by arginine 139, glutamate 176, lysine 295, and lysine 319. 4 residues coordinate Zn(2+): cysteine 413, cysteine 416, cysteine 431, and cysteine 437. The BRCT domain maps to 596 to 677 (LDELPLAGQV…MLAMFADLEG (82 aa)).

It belongs to the NAD-dependent DNA ligase family. LigA subfamily. It depends on Mg(2+) as a cofactor. Mn(2+) serves as cofactor.

The catalysed reaction is NAD(+) + (deoxyribonucleotide)n-3'-hydroxyl + 5'-phospho-(deoxyribonucleotide)m = (deoxyribonucleotide)n+m + AMP + beta-nicotinamide D-nucleotide.. Functionally, DNA ligase that catalyzes the formation of phosphodiester linkages between 5'-phosphoryl and 3'-hydroxyl groups in double-stranded DNA using NAD as a coenzyme and as the energy source for the reaction. It is essential for DNA replication and repair of damaged DNA. This chain is DNA ligase, found in Pseudoalteromonas atlantica (strain T6c / ATCC BAA-1087).